Reading from the N-terminus, the 473-residue chain is ATP synthase subunit beta (473 aa).

Residue 158-165 participates in ATP binding; that stretch reads GGAGVGKT.

Belongs to the ATPase alpha/beta chains family. As to quaternary structure, F-type ATPases have 2 components, CF(1) - the catalytic core - and CF(0) - the membrane proton channel. CF(1) has five subunits: alpha(3), beta(3), gamma(1), delta(1), epsilon(1). CF(0) has three main subunits: a(1), b(2) and c(9-12). The alpha and beta chains form an alternating ring which encloses part of the gamma chain. CF(1) is attached to CF(0) by a central stalk formed by the gamma and epsilon chains, while a peripheral stalk is formed by the delta and b chains.

The protein localises to the cell membrane. The enzyme catalyses ATP + H2O + 4 H(+)(in) = ADP + phosphate + 5 H(+)(out). Produces ATP from ADP in the presence of a proton gradient across the membrane. The catalytic sites are hosted primarily by the beta subunits. In Bacillus licheniformis (strain ATCC 14580 / DSM 13 / JCM 2505 / CCUG 7422 / NBRC 12200 / NCIMB 9375 / NCTC 10341 / NRRL NRS-1264 / Gibson 46), this protein is ATP synthase subunit beta.